The following is a 530-amino-acid chain: Probable 1,4-beta-D-glucan cellobiohydrolase B (530 aa).

An N-terminal signal peptide occupies residues 1–26 (MLASTFSYRMYKTALILAALLGSGQA). The catalytic stretch occupies residues 27–461 (QQVGTSQAEV…SNIKVGPIGS (435 aa)). Glutamate 238 functions as the Nucleophile in the catalytic mechanism. Glutamate 243 serves as the catalytic Proton donor. Asparagine 296 carries N-linked (GlcNAc...) asparagine glycosylation. Positions 462–492 (TFNSGGSNPGGGTTTTAKPTTTTTTAGSPGG) are disordered. Positions 462-494 (TFNSGGSNPGGGTTTTAKPTTTTTTAGSPGGTG) are ser/Thr-rich linker. Residues 475 to 488 (TTTAKPTTTTTTAG) show a composition bias toward low complexity. A CBM1 domain is found at 494–530 (GVAQHYGQCGGNGWQGPTTCASPYTCQKLNDFYSQCL). 2 disulfides stabilise this stretch: cysteine 502–cysteine 519 and cysteine 513–cysteine 529.

It belongs to the glycosyl hydrolase 7 (cellulase C) family.

The protein localises to the secreted. It catalyses the reaction Hydrolysis of (1-&gt;4)-beta-D-glucosidic linkages in cellulose and cellotetraose, releasing cellobiose from the non-reducing ends of the chains.. The biological conversion of cellulose to glucose generally requires three types of hydrolytic enzymes: (1) Endoglucanases which cut internal beta-1,4-glucosidic bonds; (2) Exocellobiohydrolases that cut the disaccharide cellobiose from the non-reducing end of the cellulose polymer chain; (3) Beta-1,4-glucosidases which hydrolyze the cellobiose and other short cello-oligosaccharides to glucose. The protein is Probable 1,4-beta-D-glucan cellobiohydrolase B (cbhB) of Neosartorya fischeri (strain ATCC 1020 / DSM 3700 / CBS 544.65 / FGSC A1164 / JCM 1740 / NRRL 181 / WB 181) (Aspergillus fischerianus).